The sequence spans 331 residues: Polyprenyl transferase mpaA' (331 aa).

The next 8 membrane-spanning stretches (helical) occupy residues 27 to 47, 56 to 76, 127 to 147, 159 to 179, 190 to 210, 240 to 260, 264 to 284, and 295 to 315; these read MPYY…ALKL, IEFI…LCGA, LILD…SIML, VFVY…ITGW, GDII…CVYF, LFLA…ISTI, WLWV…IAQF, and IHWD…VEVG.

It belongs to the UbiA prenyltransferase family. Mg(2+) is required as a cofactor.

It is found in the golgi apparatus membrane. The catalysed reaction is 5,7-dihydroxy-4-methylphthalide + (2E,6E)-farnesyl diphosphate = 4-farnesyl-3,5-dihydroxy-6-methylphthalide + diphosphate. Its pathway is secondary metabolite biosynthesis; terpenoid biosynthesis. In terms of biological role, polyprenyl transferase; part of the gene cluster that mediates the biosynthesis of mycophenolic acid (MPA), the first isolated antibiotic natural product in the world obtained from a culture of Penicillium brevicompactum in 1893. MpaA' is a Golgi apparatus-associated enzyme that catalyzes the prenylation of 5,7-dihydroxy-4,6-dimethylphthalide (DHMP) to yield farnesyl-DHMP (FDHMP). The first step of the pathway is the synthesis of 5-methylorsellinic acid (5MOA) by the cytosolic polyketide synthase mpaC. 5MOA is then converted to the phthalide compound 5,7-dihydroxy-4,6-dimethylphthalide (DHMP) by the endoplasmic reticulum-bound cytochrome P450 monooxygenase mpaDE. MpaDE first catalyzes hydroxylation of 5-MOA to 4,6-dihydroxy-2-(hydroxymethyl)-3-methylbenzoic acid (DHMB). MpaDE then acts as a lactone synthase that catalyzes the ring closure to convert DHMB into DHMP. The next step is the prenylation of DHMP by the Golgi apparatus-associated prenyltransferase mpaA to yield farnesyl-DHMP (FDHMP). The ER-bound oxygenase mpaB then mediates the oxidative cleavage the C19-C20 double bond in FDHMP to yield FDHMP-3C via a mycophenolic aldehyde intermediate. The O-methyltransferase mpaG catalyzes the methylation of FDHMP-3C to yield MFDHMP-3C. After the cytosolic methylation of FDHMP-3C, MFDHMP-3C enters into peroxisomes probably via free diffusion due to its low molecular weight. Upon a peroxisomal CoA ligation reaction, catalyzed by a beta-oxidation component enzyme acyl-CoA ligase ACL891, MFDHMP-3C-CoA would then be restricted to peroxisomes for the following beta-oxidation pathway steps. The peroxisomal beta-oxidation machinery than converts MFDHMP-3C-CoA into MPA_CoA, via a beta-oxidation chain-shortening process. Finally mpaH acts as a peroxisomal acyl-CoA hydrolase with high substrate specificity toward MPA-CoA to release the final product MPA. This Penicillium brevicompactum protein is Polyprenyl transferase mpaA'.